A 239-amino-acid polypeptide reads, in one-letter code: Protein TIPIN homolog (239 aa).

Composition is skewed to acidic residues over residues 1 to 14 and 156 to 166; these read MDEMDDFFGNDELD and DGADDDEDDLF. Disordered stretches follow at residues 1–38 and 135–239; these read MDEMDDFFGNDELDREPSPFGEEAIEDNTGEEGSRRII and ESTD…NNDW. 2 stretches are compositionally biased toward basic and acidic residues: residues 169-193 and 206-223; these read LPEKETPTKPINHTEKVVDSPEKKN and YRMMEEERLREEQEAREA. Over residues 224 to 239 the composition is skewed to acidic residues; the sequence is EAEDELMEDFDLNNDW.

This sequence belongs to the CSM3 family.

Its subcellular location is the cytoplasm. The protein localises to the nucleus. In terms of biological role, required for normal progression of S-phase. Important for cell survival after DNA damage or replication stress. The sequence is that of Protein TIPIN homolog from Caenorhabditis briggsae.